We begin with the raw amino-acid sequence, 369 residues long: 4-hydroxy-3-methylbut-2-en-1-yl diphosphate synthase (flavodoxin) (369 aa).

Positions 270, 273, 305, and 312 each coordinate [4Fe-4S] cluster.

This sequence belongs to the IspG family. [4Fe-4S] cluster serves as cofactor.

It catalyses the reaction (2E)-4-hydroxy-3-methylbut-2-enyl diphosphate + oxidized [flavodoxin] + H2O + 2 H(+) = 2-C-methyl-D-erythritol 2,4-cyclic diphosphate + reduced [flavodoxin]. It functions in the pathway isoprenoid biosynthesis; isopentenyl diphosphate biosynthesis via DXP pathway; isopentenyl diphosphate from 1-deoxy-D-xylulose 5-phosphate: step 5/6. In terms of biological role, converts 2C-methyl-D-erythritol 2,4-cyclodiphosphate (ME-2,4cPP) into 1-hydroxy-2-methyl-2-(E)-butenyl 4-diphosphate. The polypeptide is 4-hydroxy-3-methylbut-2-en-1-yl diphosphate synthase (flavodoxin) (Pseudomonas syringae pv. syringae (strain B728a)).